The sequence spans 354 residues: Protein RecA (354 aa).

78-85 contributes to the ATP binding site; the sequence is GPESSGKT.

It belongs to the RecA family.

It is found in the cytoplasm. Can catalyze the hydrolysis of ATP in the presence of single-stranded DNA, the ATP-dependent uptake of single-stranded DNA by duplex DNA, and the ATP-dependent hybridization of homologous single-stranded DNAs. It interacts with LexA causing its activation and leading to its autocatalytic cleavage. This is Protein RecA from Zymomonas mobilis subsp. mobilis (strain ATCC 31821 / ZM4 / CP4).